Reading from the N-terminus, the 113-residue chain is Dolichyl-diphosphooligosaccharide--protein glycosyltransferase subunit dad-1 (113 aa).

The Cytoplasmic portion of the chain corresponds to 1–32 (MAAQVVPVLSKLFDDYQKTTSSKLKIIDAYMT). A helical transmembrane segment spans residues 33–53 (YILFTGIFQFIYCLLVGTFPF). Residues 54 to 55 (NS) are Lumenal-facing. The helical transmembrane segment at 56-78 (FLSGFISTVTSFVLASCLRMQVN) threads the bilayer. Residues 79–92 (QENRSEFTAVSTER) are Cytoplasmic-facing. The helical transmembrane segment at 93 to 113 (AFADFIFANLILHLVVVNFLG) threads the bilayer.

This sequence belongs to the DAD/OST2 family. In terms of assembly, component of the oligosaccharyltransferase (OST) complex.

The protein localises to the endoplasmic reticulum membrane. It functions in the pathway protein modification; protein glycosylation. In terms of biological role, subunit of the oligosaccharyl transferase (OST) complex that catalyzes the initial transfer of a defined glycan (Glc(3)Man(9)GlcNAc(2) in eukaryotes) from the lipid carrier dolichol-pyrophosphate to an asparagine residue within an Asn-X-Ser/Thr consensus motif in nascent polypeptide chains, the first step in protein N-glycosylation. N-glycosylation occurs cotranslationally and the complex associates with the Sec61 complex at the channel-forming translocon complex that mediates protein translocation across the endoplasmic reticulum (ER). All subunits are required for a maximal enzyme activity. Possesses cell death-inhibiting activity. Suppresses some programmed cell death in C.elegans. The sequence is that of Dolichyl-diphosphooligosaccharide--protein glycosyltransferase subunit dad-1 from Caenorhabditis elegans.